Consider the following 342-residue polypeptide: Lumican (342 aa).

An N-terminal signal peptide occupies residues 1–18 (MNLGVFPLLLALIGGASS). A sulfotyrosine mark is found at tyrosine 20, tyrosine 23, and tyrosine 34. Positions 32-70 (ALYGRSSPNCAPECNCPESYPSAMYCDELKLKSVPMVPP) constitute an LRRNT domain. LRR repeat units follow at residues 71–92 (GIKY…AFEN), 95–118 (DLQW…VFSK), 121–141 (QLKK…PLPK), 142–163 (SLVD…DGLV), 164–185 (NLTF…AALK), 189–209 (SLEY…GLPV), 210–231 (SLLT…YFKR), and 234–254 (ALQY…PGNS). Asparagine 92 carries an N-linked (GlcNAc...) (keratan sulfate) asparagine glycan. N-linked (GlcNAc...) (keratan sulfate) asparagine glycosylation is present at asparagine 131. An N-linked (GlcNAc...) (keratan sulfate) asparagine glycan is attached at asparagine 164. Asparagine 256 is a glycosylation site (N-linked (GlcNAc...) (keratan sulfate) asparagine). LRR repeat units lie at residues 259 to 280 (SLLE…NENL) and 281 to 300 (ENYY…SFCK). Cysteine 299 and cysteine 332 are joined by a disulfide. Serine 308 is subject to Phosphoserine. Residues 309-330 (KIKHLRLDGNHITQTSLPPDMY) form an LRR 11 repeat.

Belongs to the small leucine-rich proteoglycan (SLRP) family. SLRP class II subfamily. As to quaternary structure, binds to laminin. Sulfated on tyrosine residue(s). In terms of processing, contains keratan sulfate. Cornea and other tissues.

It is found in the secreted. The protein localises to the extracellular space. Its subcellular location is the extracellular matrix. The polypeptide is Lumican (LUM) (Bos taurus (Bovine)).